The sequence spans 331 residues: Major outer membrane protein P.IB (331 aa).

Positions 1 to 19 (MKKSLIALTLAALPVAAMA) are cleaved as a signal peptide.

The protein belongs to the Gram-negative porin family. As to quaternary structure, homotrimer.

It is found in the cell outer membrane. Serves as a slightly cation selective porin. This Neisseria meningitidis serogroup B protein is Major outer membrane protein P.IB (porB).